Reading from the N-terminus, the 362-residue chain is 3-dehydroquinate synthase (362 aa).

NAD(+) contacts are provided by residues 70 to 75, 104 to 108, 128 to 129, K141, K150, and 168 to 171; these read EGEQYK, GVIGD, TT, and TLTT. E183, H246, and H263 together coordinate Zn(2+).

The protein belongs to the sugar phosphate cyclases superfamily. Dehydroquinate synthase family. Co(2+) serves as cofactor. The cofactor is Zn(2+). Requires NAD(+) as cofactor.

The protein resides in the cytoplasm. It carries out the reaction 7-phospho-2-dehydro-3-deoxy-D-arabino-heptonate = 3-dehydroquinate + phosphate. It functions in the pathway metabolic intermediate biosynthesis; chorismate biosynthesis; chorismate from D-erythrose 4-phosphate and phosphoenolpyruvate: step 2/7. In terms of biological role, catalyzes the conversion of 3-deoxy-D-arabino-heptulosonate 7-phosphate (DAHP) to dehydroquinate (DHQ). The protein is 3-dehydroquinate synthase of Histophilus somni (strain 129Pt) (Haemophilus somnus).